A 564-amino-acid chain; its full sequence is Kelch repeat and BTB domain-containing protein 1 (564 aa).

A BTB domain is found at 21–88; that stretch reads CDINIVINDE…IYGIPLSLTN (68 aa). In terms of domain architecture, BACK spans 123–219; it reads CIDFYIYADK…SLLSPQVIKS (97 aa). Kelch repeat units lie at residues 252-297, 298-346, 347-395, 397-441, 442-492, and 494-539; these read IELI…VLDN, IIYM…ADDE, YIYC…MLNG, IYVI…VHDG, KIYI…SAHN, and LYVG…CEPI.

As to quaternary structure, interacts (via BTB domain) with host CUL3.

It is found in the host cytoplasm. In terms of biological role, probable substrate-specific adapter of CUL3-containing E3 ubiquitin-protein ligases which mediate the ubiquitination and subsequent proteasomal degradation of host target proteins. The chain is Kelch repeat and BTB domain-containing protein 1 (KBTB1) from Cowpox virus (strain GRI-90 / Grishak) (CPV).